The primary structure comprises 351 residues: Cell division protein FtsZ (351 aa).

GTP-binding positions include 31–35 (GAGNN), 118–120 (GTG), glutamate 149, arginine 153, and aspartate 197.

Belongs to the FtsZ family. As to quaternary structure, homodimer. Polymerizes to form a dynamic ring structure in a strictly GTP-dependent manner. Interacts directly with several other division proteins. Interacts with FtsA.

Its subcellular location is the cytoplasm. Functionally, essential cell division protein that forms a contractile ring structure (Z ring) at the future cell division site. The regulation of the ring assembly controls the timing and the location of cell division. One of the functions of the FtsZ ring is to recruit other cell division proteins to the septum to produce a new cell wall between the dividing cells. Binds GTP and shows GTPase activity. The protein is Cell division protein FtsZ of Thermotoga maritima (strain ATCC 43589 / DSM 3109 / JCM 10099 / NBRC 100826 / MSB8).